The chain runs to 556 residues: Formate--tetrahydrofolate ligase (556 aa).

65 to 72 is a binding site for ATP; the sequence is TPAGEGKS.

It belongs to the formate--tetrahydrofolate ligase family.

It carries out the reaction (6S)-5,6,7,8-tetrahydrofolate + formate + ATP = (6R)-10-formyltetrahydrofolate + ADP + phosphate. It functions in the pathway one-carbon metabolism; tetrahydrofolate interconversion. This is Formate--tetrahydrofolate ligase from Streptococcus thermophilus (strain ATCC BAA-491 / LMD-9).